The chain runs to 306 residues: Pentalenolactone F synthase (306 aa).

Residues H110 and D112 each contribute to the Fe cation site. T138 and W258 together coordinate 2-oxoglutarate. Residue H273 participates in Fe cation binding. Residue R284 participates in 2-oxoglutarate binding.

Belongs to the TfdA dioxygenase family. Fe(2+) serves as cofactor.

It carries out the reaction pentalenolactone D + 2 2-oxoglutarate + 2 O2 = pentalenolactone F + 2 succinate + 2 CO2 + H2O. It participates in antibiotic biosynthesis; neopentalenolactone biosynthesis. Activated by ascorbate. In terms of biological role, catalyzes the Fe(2+) and alpha-ketoglutarate-dependent oxidation of pentalenolactone D to pentalenolactone F. Also able to catalyze the oxidation of pentalenolactone D to pentalenolactone E. In presence of neopentalenolactone D, mediates production of PL308 and possibly neopentalenolactone E. This is Pentalenolactone F synthase (ptlD) from Streptomyces avermitilis (strain ATCC 31267 / DSM 46492 / JCM 5070 / NBRC 14893 / NCIMB 12804 / NRRL 8165 / MA-4680).